The primary structure comprises 71 residues: Large ribosomal subunit protein bL28 (71 aa).

It belongs to the bacterial ribosomal protein bL28 family.

The polypeptide is Large ribosomal subunit protein bL28 (Rubrobacter xylanophilus (strain DSM 9941 / JCM 11954 / NBRC 16129 / PRD-1)).